The chain runs to 1212 residues: DNA-directed RNA polymerase subunit beta' (1212 aa).

Zn(2+)-binding residues include Cys60, Cys62, Cys75, and Cys78. Mg(2+) contacts are provided by Asp450, Asp452, and Asp454. Zn(2+) is bound by residues Cys819, Cys893, Cys900, and Cys903.

This sequence belongs to the RNA polymerase beta' chain family. The RNAP catalytic core consists of 2 alpha, 1 beta, 1 beta' and 1 omega subunit. When a sigma factor is associated with the core the holoenzyme is formed, which can initiate transcription. Mg(2+) serves as cofactor. Requires Zn(2+) as cofactor.

The catalysed reaction is RNA(n) + a ribonucleoside 5'-triphosphate = RNA(n+1) + diphosphate. Its function is as follows. DNA-dependent RNA polymerase catalyzes the transcription of DNA into RNA using the four ribonucleoside triphosphates as substrates. This chain is DNA-directed RNA polymerase subunit beta', found in Streptococcus thermophilus (strain CNRZ 1066).